The primary structure comprises 620 residues: Translation initiation factor IF-2 (620 aa).

The region spanning 126–295 (KRPPIVTIMG…IVTAEIMELK (170 aa)) is the tr-type G domain. The interval 135–142 (GHVDHGKT) is G1. 135–142 (GHVDHGKT) contributes to the GTP binding site. The segment at 160–164 (NITQS) is G2. Positions 181–184 (DTPG) are G3. GTP contacts are provided by residues 181-185 (DTPGH) and 235-238 (NKMD). The interval 235-238 (NKMD) is G4. A G5 region spans residues 271 to 273 (SAL).

Belongs to the TRAFAC class translation factor GTPase superfamily. Classic translation factor GTPase family. IF-2 subfamily.

The protein localises to the cytoplasm. Its function is as follows. One of the essential components for the initiation of protein synthesis. Protects formylmethionyl-tRNA from spontaneous hydrolysis and promotes its binding to the 30S ribosomal subunits. Also involved in the hydrolysis of GTP during the formation of the 70S ribosomal complex. In Malacoplasma penetrans (strain HF-2) (Mycoplasma penetrans), this protein is Translation initiation factor IF-2.